Here is a 30-residue protein sequence, read N- to C-terminus: Cyclotide cter-Q (30 aa).

The segment at residues 1 to 30 (GIPCGESCVFIPCISTVIGCSCKNKVCYRN) is a cross-link (cyclopeptide (Gly-Asn)). 3 disulfide bridges follow: C4–C20, C8–C22, and C13–C27.

In terms of processing, this is a cyclic peptide.

It is found in the secreted. Probably participates in a plant defense mechanism. The chain is Cyclotide cter-Q from Clitoria ternatea (Butterfly pea).